A 562-amino-acid chain; its full sequence is Actin-related protein 8 (562 aa).

Position 248–251 (248–251 (DVGD)) interacts with ATP.

The protein belongs to the actin family. ARP8 subfamily. In terms of assembly, component of the chromatin remodeling Ino80 complex. Exists as monomers and dimers, but the dimer is most probably the biologically relevant form required for stable interactions with histones that exploits the twofold symmetry of the nucleosome core.

It is found in the nucleus. Plays an important role in the functional organization of mitotic chromosomes. Exhibits low basal ATPase activity, and unable to polymerize. Functionally, proposed core component of the chromatin remodeling INO80 complex which is involved in transcriptional regulation, DNA replication and probably DNA repair. Strongly prefer nucleosomes and H3-H4 tetramers over H2A-H2B dimers, suggesting it may act as a nucleosome recognition module within the complex. The chain is Actin-related protein 8 from Aedes aegypti (Yellowfever mosquito).